Consider the following 345-residue polypeptide: 4-hydroxy-3-methylbut-2-en-1-yl diphosphate synthase (flavodoxin) (345 aa).

[4Fe-4S] cluster-binding residues include C271, C274, C306, and E313.

This sequence belongs to the IspG family. It depends on [4Fe-4S] cluster as a cofactor.

The enzyme catalyses (2E)-4-hydroxy-3-methylbut-2-enyl diphosphate + oxidized [flavodoxin] + H2O + 2 H(+) = 2-C-methyl-D-erythritol 2,4-cyclic diphosphate + reduced [flavodoxin]. It participates in isoprenoid biosynthesis; isopentenyl diphosphate biosynthesis via DXP pathway; isopentenyl diphosphate from 1-deoxy-D-xylulose 5-phosphate: step 5/6. Its function is as follows. Converts 2C-methyl-D-erythritol 2,4-cyclodiphosphate (ME-2,4cPP) into 1-hydroxy-2-methyl-2-(E)-butenyl 4-diphosphate. This is 4-hydroxy-3-methylbut-2-en-1-yl diphosphate synthase (flavodoxin) from Haemophilus influenzae (strain PittEE).